The chain runs to 245 residues: tRNA pseudouridine synthase A (245 aa).

Residue Asp-52 is the Nucleophile of the active site. Tyr-111 contacts substrate.

This sequence belongs to the tRNA pseudouridine synthase TruA family. Homodimer.

The catalysed reaction is uridine(38/39/40) in tRNA = pseudouridine(38/39/40) in tRNA. Formation of pseudouridine at positions 38, 39 and 40 in the anticodon stem and loop of transfer RNAs. The sequence is that of tRNA pseudouridine synthase A from Rhodopseudomonas palustris (strain BisB18).